The primary structure comprises 271 residues: High mobility group protein homolog TDP-1 (271 aa).

Positions 8–63 constitute a DEK-C domain; sequence GPLPTDIEETVITIMREEGVRYITAKILRMRLESKYQMEFGPHKAAIDDIVARAMQ. The segment at 75-118 is disordered; it reads LKEKDASKSSGGKGSKRARSAGAEAPSKTKKEMTEKPKKPADYP. A compositionally biased stretch (basic and acidic residues) spans 101-116; that stretch reads SKTKKEMTEKPKKPAD. 2 consecutive DNA-binding regions (HMG box) follow at residues 118–186 and 206–270; these read PKPA…DEYK and PKRA…AALP.

Its subcellular location is the nucleus. Unknown. May play a role in transcription and/or DNA replication. It is not known whether this protein is DNA sequence binding-specific or not. The polypeptide is High mobility group protein homolog TDP-1 (Trypanosoma brucei rhodesiense).